The primary structure comprises 302 residues: N-acetyl-D-glucosamine kinase (302 aa).

Residues 4–11 (GFDVGGTK) and 133–140 (GFGGGLVF) contribute to the ATP site. The Zn(2+) site is built by H157, C177, C179, and C184.

The protein belongs to the ROK (NagC/XylR) family. NagK subfamily.

It catalyses the reaction N-acetyl-D-glucosamine + ATP = N-acetyl-D-glucosamine 6-phosphate + ADP + H(+). It participates in cell wall biogenesis; peptidoglycan recycling. Its function is as follows. Catalyzes the phosphorylation of N-acetyl-D-glucosamine (GlcNAc) derived from cell-wall degradation, yielding GlcNAc-6-P. The protein is N-acetyl-D-glucosamine kinase of Aliivibrio salmonicida (strain LFI1238) (Vibrio salmonicida (strain LFI1238)).